The primary structure comprises 375 residues: Growth/differentiation factor 8 (375 aa).

A signal peptide spans 1 to 23; it reads MQKLQIYVYIYLFMLIVAGPVDL. Positions 24–266 are excised as a propeptide; it reads NENSEQKENV…VTDTPKRSRR (243 aa). Asn71 carries an N-linked (GlcNAc...) asparagine glycan. 4 cysteine pairs are disulfide-bonded: Cys272–Cys282, Cys281–Cys340, Cys309–Cys372, and Cys313–Cys374.

It belongs to the TGF-beta family. As to quaternary structure, homodimer; disulfide-linked. Interacts with WFIKKN2, leading to inhibit its activity. Interacts with FSTL3. In terms of processing, synthesized as large precursor molecule that undergoes proteolytic cleavage to generate an N-terminal propeptide and a disulfide linked C-terminal dimer, which is the biologically active molecule. The circulating form consists of a latent complex of the C-terminal dimer and other proteins, including its propeptide, which maintain the C-terminal dimer in a latent, inactive state. Ligand activation requires additional cleavage of the prodomain by a tolloid-like metalloproteinase.

It localises to the secreted. In terms of biological role, acts specifically as a negative regulator of skeletal muscle growth. The protein is Growth/differentiation factor 8 (MSTN) of Sus scrofa (Pig).